A 67-amino-acid chain; its full sequence is DNA-directed RNA polymerase subunit omega (67 aa).

The protein belongs to the RNA polymerase subunit omega family. As to quaternary structure, the RNAP catalytic core consists of 2 alpha, 1 beta, 1 beta' and 1 omega subunit. When a sigma factor is associated with the core the holoenzyme is formed, which can initiate transcription.

The catalysed reaction is RNA(n) + a ribonucleoside 5'-triphosphate = RNA(n+1) + diphosphate. Its function is as follows. Promotes RNA polymerase assembly. Latches the N- and C-terminal regions of the beta' subunit thereby facilitating its interaction with the beta and alpha subunits. The protein is DNA-directed RNA polymerase subunit omega of Listeria monocytogenes serotype 4a (strain HCC23).